Consider the following 150-residue polypeptide: UPF0735 ACT domain-containing protein Csac_0995 (150 aa).

The region spanning 72–147 (TLALVLQDVP…GVKKIEILGR (76 aa)) is the ACT domain.

Belongs to the UPF0735 family.

This Caldicellulosiruptor saccharolyticus (strain ATCC 43494 / DSM 8903 / Tp8T 6331) protein is UPF0735 ACT domain-containing protein Csac_0995.